A 295-amino-acid polypeptide reads, in one-letter code: Bifunctional protein FolD (295 aa).

Residues 177–179 (GRS) and Ser-202 each bind NADP(+).

It belongs to the tetrahydrofolate dehydrogenase/cyclohydrolase family. Homodimer.

The enzyme catalyses (6R)-5,10-methylene-5,6,7,8-tetrahydrofolate + NADP(+) = (6R)-5,10-methenyltetrahydrofolate + NADPH. It carries out the reaction (6R)-5,10-methenyltetrahydrofolate + H2O = (6R)-10-formyltetrahydrofolate + H(+). It functions in the pathway one-carbon metabolism; tetrahydrofolate interconversion. Functionally, catalyzes the oxidation of 5,10-methylenetetrahydrofolate to 5,10-methenyltetrahydrofolate and then the hydrolysis of 5,10-methenyltetrahydrofolate to 10-formyltetrahydrofolate. This Psychrobacter arcticus (strain DSM 17307 / VKM B-2377 / 273-4) protein is Bifunctional protein FolD.